The following is a 284-amino-acid chain: MSDRLAVLSQYLLPKQALTAVMGRLAQARAGDLTTAVIRRFIARYGVDMSEAADSDPAAYASFNEFFTRALKPGVRPLASADWVCPVDGAISQIGAIEGEQIFQAKGHSYSATALVGGDAQLARQFDNGHFATIYLSPRDYHRIHMPCAGRLRRMIYVPGELFSVNPVTARGVPGLFARNERVVCVFDTDHGPMVLVLVGATIVGSMGTVWHGIVNPPRPGRIQDWRYDDQSIVLGQGEEMGRFQLGSTVVMLFPASAGLRFNGQWTHAAPVRLGQKMAGRNEA.

Residues Asp-88, His-145, and Ser-248 each act as charge relay system; for autoendoproteolytic cleavage activity in the active site. The active-site Schiff-base intermediate with substrate; via pyruvic acid; for decarboxylase activity is Ser-248. Pyruvic acid (Ser); by autocatalysis is present on Ser-248.

It belongs to the phosphatidylserine decarboxylase family. PSD-B subfamily. Prokaryotic type I sub-subfamily. As to quaternary structure, heterodimer of a large membrane-associated beta subunit and a small pyruvoyl-containing alpha subunit. Pyruvate is required as a cofactor. In terms of processing, is synthesized initially as an inactive proenzyme. Formation of the active enzyme involves a self-maturation process in which the active site pyruvoyl group is generated from an internal serine residue via an autocatalytic post-translational modification. Two non-identical subunits are generated from the proenzyme in this reaction, and the pyruvate is formed at the N-terminus of the alpha chain, which is derived from the carboxyl end of the proenzyme. The autoendoproteolytic cleavage occurs by a canonical serine protease mechanism, in which the side chain hydroxyl group of the serine supplies its oxygen atom to form the C-terminus of the beta chain, while the remainder of the serine residue undergoes an oxidative deamination to produce ammonia and the pyruvoyl prosthetic group on the alpha chain. During this reaction, the Ser that is part of the protease active site of the proenzyme becomes the pyruvoyl prosthetic group, which constitutes an essential element of the active site of the mature decarboxylase.

Its subcellular location is the cell membrane. It catalyses the reaction a 1,2-diacyl-sn-glycero-3-phospho-L-serine + H(+) = a 1,2-diacyl-sn-glycero-3-phosphoethanolamine + CO2. The protein operates within phospholipid metabolism; phosphatidylethanolamine biosynthesis; phosphatidylethanolamine from CDP-diacylglycerol: step 2/2. In terms of biological role, catalyzes the formation of phosphatidylethanolamine (PtdEtn) from phosphatidylserine (PtdSer). The sequence is that of Phosphatidylserine decarboxylase proenzyme from Delftia acidovorans (strain DSM 14801 / SPH-1).